A 151-amino-acid chain; its full sequence is MKCPKCGSLNDKVLETRQSKEGVVIKRRRECLNCGYRFTTYERIEEEHIEVIKKNNTVEPFNKEKIIRGILLASKNRPITQEQIKQIADDIEKYLLDEGKLKVSSAEIGDLVKNRLKELDPVSYLRFVSVFDGFEDIKDFEEFIKSFEKKI.

A zinc finger spans residues 3–34 (CPKCGSLNDKVLETRQSKEGVVIKRRRECLNC). Positions 49–139 (IEVIKKNNTV…VFDGFEDIKD (91 aa)) constitute an ATP-cone domain.

This sequence belongs to the NrdR family. Zn(2+) serves as cofactor.

Negatively regulates transcription of bacterial ribonucleotide reductase nrd genes and operons by binding to NrdR-boxes. This is Transcriptional repressor NrdR from Sulfurihydrogenibium sp. (strain YO3AOP1).